The sequence spans 1345 residues: DNA-directed RNA polymerase subunit beta (1345 aa).

It belongs to the RNA polymerase beta chain family. In terms of assembly, the RNAP catalytic core consists of 2 alpha, 1 beta, 1 beta' and 1 omega subunit. When a sigma factor is associated with the core the holoenzyme is formed, which can initiate transcription.

It catalyses the reaction RNA(n) + a ribonucleoside 5'-triphosphate = RNA(n+1) + diphosphate. DNA-dependent RNA polymerase catalyzes the transcription of DNA into RNA using the four ribonucleoside triphosphates as substrates. The polypeptide is DNA-directed RNA polymerase subunit beta (Shewanella oneidensis (strain ATCC 700550 / JCM 31522 / CIP 106686 / LMG 19005 / NCIMB 14063 / MR-1)).